We begin with the raw amino-acid sequence, 281 residues long: Elongation factor 1-delta (281 aa).

An N-acetylalanine modification is found at Ala2. An N6-acetyllysine modification is found at Lys17. Residues Ser37, Ser44, Ser60, Ser86, and Ser106 each carry the phosphoserine modification. The tract at residues 80–115 (LVVRIASLEVENQSLRGVVQELQQAISKLEARLNVL) is leucine-zipper. At Lys107 the chain carries N6-acetyllysine. Lys117 is subject to N6-acetyllysine; alternate. Lys117 is subject to N6-succinyllysine; alternate. The interval 118–172 (SSPGHRATAPQTQHVSPMRQVEPPAKKPATPAEDDEDDDIDLFGSDNEEEDKEAA) is disordered. Ser119 carries the post-translational modification Phosphoserine. A Phosphothreonine modification is found at Thr129. At Ser133 the chain carries Phosphoserine. Thr147 carries the phosphothreonine modification. A compositionally biased stretch (acidic residues) spans 149–169 (AEDDEDDDIDLFGSDNEEEDK). Ser162 carries the phosphoserine; by CK2 modification. Residues 173-281 (QLREERLRQY…SVDIAAFNKI (109 aa)) form a catalytic (GEF) region.

The protein belongs to the EF-1-beta/EF-1-delta family. As to quaternary structure, EF-1 is composed of 4 subunits: alpha, beta, delta isoform 1, and gamma. Isoform 2 interacts with HSF1 and NFE2L2.

It localises to the nucleus. Its function is as follows. EF-1-beta and EF-1-delta stimulate the exchange of GDP bound to EF-1-alpha to GTP, regenerating EF-1-alpha for another round of transfer of aminoacyl-tRNAs to the ribosome. Regulates induction of heat-shock-responsive genes through association with heat shock transcription factors and direct DNA-binding at heat shock promoter elements (HSE). In Macaca fascicularis (Crab-eating macaque), this protein is Elongation factor 1-delta (EEF1D).